A 514-amino-acid polypeptide reads, in one-letter code: Transcription termination factor Rho (514 aa).

A disordered region spans residues 25–52 (EPSSTPGPARNARRSNRRMRHPDKDVDK). Over residues 35–45 (NARRSNRRMRH) the composition is skewed to basic residues. A Rho RNA-BD domain is found at 141–216 (LMYGEGTLEI…LRIEAINHAD (76 aa)). Residues 259-264 (GFGQRG), 271-276 (RAGKTM), and Arg302 contribute to the ATP site.

Belongs to the Rho family. Homohexamer. The homohexamer assembles into an open ring structure.

In terms of biological role, facilitates transcription termination by a mechanism that involves Rho binding to the nascent RNA, activation of Rho's RNA-dependent ATPase activity, and release of the mRNA from the DNA template. The chain is Transcription termination factor Rho from Rhodopirellula baltica (strain DSM 10527 / NCIMB 13988 / SH1).